Consider the following 121-residue polypeptide: MTAFSFKKEDRLLKRYEFIEIFTSGKTVHSSCFLAGIKKNRKERIRLGITVSKKVGKAARRNRIKRHVREFFRLHRDNLSNCWDINVIAKKKAVNASPAELERSLAELFHKSSREFPSDRQ.

Belongs to the RnpA family. In terms of assembly, consists of a catalytic RNA component (M1 or rnpB) and a protein subunit.

It catalyses the reaction Endonucleolytic cleavage of RNA, removing 5'-extranucleotides from tRNA precursor.. RNaseP catalyzes the removal of the 5'-leader sequence from pre-tRNA to produce the mature 5'-terminus. It can also cleave other RNA substrates such as 4.5S RNA. The protein component plays an auxiliary but essential role in vivo by binding to the 5'-leader sequence and broadening the substrate specificity of the ribozyme. The protein is Ribonuclease P protein component of Desulfosudis oleivorans (strain DSM 6200 / JCM 39069 / Hxd3) (Desulfococcus oleovorans).